We begin with the raw amino-acid sequence, 319 residues long: Ribonuclease Z (319 aa).

The Zn(2+) site is built by His-62, His-64, Asp-66, His-67, His-145, Asp-216, and His-274. Asp-66 serves as the catalytic Proton acceptor.

The protein belongs to the RNase Z family. As to quaternary structure, homodimer. It depends on Zn(2+) as a cofactor.

The catalysed reaction is Endonucleolytic cleavage of RNA, removing extra 3' nucleotides from tRNA precursor, generating 3' termini of tRNAs. A 3'-hydroxy group is left at the tRNA terminus and a 5'-phosphoryl group is left at the trailer molecule.. Zinc phosphodiesterase, which displays some tRNA 3'-processing endonuclease activity. Probably involved in tRNA maturation, by removing a 3'-trailer from precursor tRNA. This is Ribonuclease Z from Parasynechococcus marenigrum (strain WH8102).